A 236-amino-acid polypeptide reads, in one-letter code: Leucyl/phenylalanyl-tRNA--protein transferase (236 aa).

This sequence belongs to the L/F-transferase family.

Its subcellular location is the cytoplasm. The enzyme catalyses N-terminal L-lysyl-[protein] + L-leucyl-tRNA(Leu) = N-terminal L-leucyl-L-lysyl-[protein] + tRNA(Leu) + H(+). The catalysed reaction is N-terminal L-arginyl-[protein] + L-leucyl-tRNA(Leu) = N-terminal L-leucyl-L-arginyl-[protein] + tRNA(Leu) + H(+). It carries out the reaction L-phenylalanyl-tRNA(Phe) + an N-terminal L-alpha-aminoacyl-[protein] = an N-terminal L-phenylalanyl-L-alpha-aminoacyl-[protein] + tRNA(Phe). Functions in the N-end rule pathway of protein degradation where it conjugates Leu, Phe and, less efficiently, Met from aminoacyl-tRNAs to the N-termini of proteins containing an N-terminal arginine or lysine. The sequence is that of Leucyl/phenylalanyl-tRNA--protein transferase from Shewanella halifaxensis (strain HAW-EB4).